The chain runs to 325 residues: tRNA dimethylallyltransferase (325 aa).

12–19 (GPTASGKT) contributes to the ATP binding site. 14–19 (TASGKT) lines the substrate pocket. 3 interaction with substrate tRNA regions span residues 37–40 (DSAL), 161–165 (QRIHR), and 244–249 (RCVGYR).

The protein belongs to the IPP transferase family. In terms of assembly, monomer. Requires Mg(2+) as cofactor.

It carries out the reaction adenosine(37) in tRNA + dimethylallyl diphosphate = N(6)-dimethylallyladenosine(37) in tRNA + diphosphate. In terms of biological role, catalyzes the transfer of a dimethylallyl group onto the adenine at position 37 in tRNAs that read codons beginning with uridine, leading to the formation of N6-(dimethylallyl)adenosine (i(6)A). In Chromobacterium violaceum (strain ATCC 12472 / DSM 30191 / JCM 1249 / CCUG 213 / NBRC 12614 / NCIMB 9131 / NCTC 9757 / MK), this protein is tRNA dimethylallyltransferase.